An 874-amino-acid polypeptide reads, in one-letter code: DNA mismatch repair protein MutS (874 aa).

Residue 613–620 coordinates ATP; it reads GPNMGGKS. The disordered stretch occupies residues 799–820; that stretch reads EAGSTPSPAPVSVNEPKPAAPT.

Belongs to the DNA mismatch repair MutS family.

In terms of biological role, this protein is involved in the repair of mismatches in DNA. It is possible that it carries out the mismatch recognition step. This protein has a weak ATPase activity. This is DNA mismatch repair protein MutS from Marinobacter nauticus (strain ATCC 700491 / DSM 11845 / VT8) (Marinobacter aquaeolei).